Here is a 630-residue protein sequence, read N- to C-terminus: MTFSTFTRKMRGRMRSNTCRIVLLTSLVWVIFDFVLIARYSDCIGKDGWRCKRSGEYDVELPNAERLVDDNQLVDDNEINTEKSLDGESGGALIMGQGFASGGISMTYPSVVLKKWFLAPSVQEAKGKPGEMGKPVKIPADMKDLMKEKFKENQFNLLASDMISLNRSLTDVRHEGCRRKHYASKLPTTSIVIVFHNEAWTTLLRTVWSVINRSPRALLKEIILVDDASERDFLGKQLEEYVAKLPVKTFVLRTEKRSGLIRARLLGAEHVSGEVITFLDAHCECTEGWLEPLLARIVQNRRTVVCPIIDVISDETFEYITASDSTWGGFNWKLNFRWYRVPSREMARRNNDRTAPLRTPTMAGGLFSIDKDYFYEIGSYDEGMDIWGGENLEMSFRIWQCGGILEIIPCSHVGHVFRDKSPYTFPGGVAKIVLHNAARVAEVWLDEWRDFYYSMSTGARKASAGDVSDRKALRDRLKCKSFRWYLENVYPESLMPLDYYYLGEIRNAETETCLDTMGRKYNEKVGISYCHGLGGNQVFAYTKRQQIMSDDLCLDASSSNGPVNMVRCHNMGGNQEWVYDAEEKWIRHTNTGQCLQRATRDDANTPLLRPCSYGKGQQWLMESKFKWQAH.

The Cytoplasmic portion of the chain corresponds to 1 to 20 (MTFSTFTRKMRGRMRSNTCR). Residues 21-38 (IVLLTSLVWVIFDFVLIA) traverse the membrane as a helical; Signal-anchor for type II membrane protein segment. The Lumenal segment spans residues 39–630 (RYSDCIGKDG…MESKFKWQAH (592 aa)). N166 carries an N-linked (GlcNAc...) asparagine glycan. 5 disulfide bridges follow: C177/C410, C401/C479, C513/C530, C553/C568, and C594/C611. Residues 186-296 (LPTTSIVIVF…EGWLEPLLAR (111 aa)) are catalytic subdomain A. 2 residues coordinate substrate: D227 and R257. D280 and H282 together coordinate Mn(2+). Positions 356 to 418 (PLRTPTMAGG…PCSHVGHVFR (63 aa)) are catalytic subdomain B. W387 contacts substrate. H415 contacts Mn(2+). Residues R418 and Y423 each coordinate substrate. The 123-residue stretch at 500–622 (YYLGEIRNAE…YGKGQQWLME (123 aa)) folds into the Ricin B-type lectin domain.

This sequence belongs to the glycosyltransferase 2 family. GalNAc-T subfamily. It depends on Mn(2+) as a cofactor. In terms of tissue distribution, expressed during oogenesis, in the somatically derived follicle cells that surround the developing oocyte, which are involved in the maturation of the oocyte and construction of the egg shell, as well as playing a role in subsequent embryonic pattern formation. During embryonic stages 9-11, expressed in the primordium of the foregut, midgut and hindgut. Expressed in salivary glands from embryonic stage 12 onwards. During embryonic stages 12-13, expressed in the posterior midgut and hindgut. During embryonic stages 14-17, expressed in the hindgut and the posterior spiracles. Expression is also detected in the epidermis and antennomaxillary complex at embryonic stages 16-17. In third instar larvae, ubiquitously expressed in wing, eye-antennal, leg and haltere imaginal disks.

Its subcellular location is the golgi apparatus membrane. The catalysed reaction is L-seryl-[protein] + UDP-N-acetyl-alpha-D-galactosamine = a 3-O-[N-acetyl-alpha-D-galactosaminyl]-L-seryl-[protein] + UDP + H(+). The enzyme catalyses L-threonyl-[protein] + UDP-N-acetyl-alpha-D-galactosamine = a 3-O-[N-acetyl-alpha-D-galactosaminyl]-L-threonyl-[protein] + UDP + H(+). The protein operates within protein modification; protein glycosylation. In terms of biological role, catalyzes the initial reaction in O-linked oligosaccharide biosynthesis, the transfer of an N-acetyl-D-galactosamine residue to a serine or threonine residue on the protein receptor. It can both act as a peptide transferase that transfers GalNAc onto unmodified peptide substrates, and as a glycopeptide transferase that requires the prior addition of a GalNAc on a peptide before adding additional GalNAc moieties. Prefers EA2 as substrate. In the larval midgut, required for O-glycosylation of apical and luminal proteins within copper cells enabling proper gut acidification. The sequence is that of Polypeptide N-acetylgalactosaminyltransferase 5 from Drosophila melanogaster (Fruit fly).